A 217-amino-acid chain; its full sequence is UPF0502 protein KPK_3478 (217 aa).

It belongs to the UPF0502 family.

This is UPF0502 protein KPK_3478 from Klebsiella pneumoniae (strain 342).